The primary structure comprises 335 residues: Holliday junction branch migration complex subunit RuvB (335 aa).

The large ATPase domain (RuvB-L) stretch occupies residues 1 to 181; the sequence is MDRIVEIEKY…FGMQFRLEFY (181 aa). ATP contacts are provided by residues Leu-20, Arg-21, Gly-62, Lys-65, Thr-66, Thr-67, 128–130, Arg-171, Tyr-181, and Arg-218; that span reads EDY. Thr-66 provides a ligand contact to Mg(2+). Residues 182-252 are small ATPAse domain (RuvB-S); the sequence is KDSELALILQ…RANEALNSLG (71 aa). Positions 255-335 are head domain (RuvB-H); the sequence is ELGFDAMDLR…LNYEKTLFEE (81 aa). Residues Arg-309 and Arg-314 each coordinate DNA.

This sequence belongs to the RuvB family. Homohexamer. Forms an RuvA(8)-RuvB(12)-Holliday junction (HJ) complex. HJ DNA is sandwiched between 2 RuvA tetramers; dsDNA enters through RuvA and exits via RuvB. An RuvB hexamer assembles on each DNA strand where it exits the tetramer. Each RuvB hexamer is contacted by two RuvA subunits (via domain III) on 2 adjacent RuvB subunits; this complex drives branch migration. In the full resolvosome a probable DNA-RuvA(4)-RuvB(12)-RuvC(2) complex forms which resolves the HJ.

It is found in the cytoplasm. The catalysed reaction is ATP + H2O = ADP + phosphate + H(+). The RuvA-RuvB-RuvC complex processes Holliday junction (HJ) DNA during genetic recombination and DNA repair, while the RuvA-RuvB complex plays an important role in the rescue of blocked DNA replication forks via replication fork reversal (RFR). RuvA specifically binds to HJ cruciform DNA, conferring on it an open structure. The RuvB hexamer acts as an ATP-dependent pump, pulling dsDNA into and through the RuvAB complex. RuvB forms 2 homohexamers on either side of HJ DNA bound by 1 or 2 RuvA tetramers; 4 subunits per hexamer contact DNA at a time. Coordinated motions by a converter formed by DNA-disengaged RuvB subunits stimulates ATP hydrolysis and nucleotide exchange. Immobilization of the converter enables RuvB to convert the ATP-contained energy into a lever motion, pulling 2 nucleotides of DNA out of the RuvA tetramer per ATP hydrolyzed, thus driving DNA branch migration. The RuvB motors rotate together with the DNA substrate, which together with the progressing nucleotide cycle form the mechanistic basis for DNA recombination by continuous HJ branch migration. Branch migration allows RuvC to scan DNA until it finds its consensus sequence, where it cleaves and resolves cruciform DNA. The protein is Holliday junction branch migration complex subunit RuvB of Campylobacter jejuni subsp. doylei (strain ATCC BAA-1458 / RM4099 / 269.97).